The primary structure comprises 514 residues: tRNA-2-methylthio-N(6)-dimethylallyladenosine synthase (514 aa).

In terms of domain architecture, MTTase N-terminal spans 68-186 (RTFLIKTYGC…LPEILEEAYL (119 aa)). Residues Cys77, Cys113, Cys147, Cys223, Cys227, and Cys230 each contribute to the [4Fe-4S] cluster site. The region spanning 209 to 439 (RDGHIKAWVN…NKKVGIYSQQ (231 aa)) is the Radical SAM core domain. The TRAM domain occupies 442-505 (SQYEGKIVTV…QYSLNGTFIQ (64 aa)).

Belongs to the methylthiotransferase family. MiaB subfamily. Monomer. Requires [4Fe-4S] cluster as cofactor.

The protein localises to the cytoplasm. The catalysed reaction is N(6)-dimethylallyladenosine(37) in tRNA + (sulfur carrier)-SH + AH2 + 2 S-adenosyl-L-methionine = 2-methylsulfanyl-N(6)-dimethylallyladenosine(37) in tRNA + (sulfur carrier)-H + 5'-deoxyadenosine + L-methionine + A + S-adenosyl-L-homocysteine + 2 H(+). Catalyzes the methylthiolation of N6-(dimethylallyl)adenosine (i(6)A), leading to the formation of 2-methylthio-N6-(dimethylallyl)adenosine (ms(2)i(6)A) at position 37 in tRNAs that read codons beginning with uridine. This is tRNA-2-methylthio-N(6)-dimethylallyladenosine synthase from Staphylococcus epidermidis (strain ATCC 35984 / DSM 28319 / BCRC 17069 / CCUG 31568 / BM 3577 / RP62A).